The chain runs to 216 residues: Superoxide dismutase [Cu-Zn] 2, chloroplastic (216 aa).

A chloroplast-targeting transit peptide spans Met-1–Ser-62. Cu cation-binding residues include His-108, His-110, and His-125. The cysteines at positions 119 and 208 are disulfide-linked. Residues His-125, His-133, His-142, and Asp-145 each contribute to the Zn(2+) site. Position 182 (His-182) interacts with Cu cation.

Belongs to the Cu-Zn superoxide dismutase family. Homotetramer. Requires Cu cation as cofactor. Zn(2+) is required as a cofactor. As to expression, expressed in leaves (at protein level). The spatial localization is regulated by miR398-mediated silencing. Mostly present in flowers, old rosette leaves and inflorescence, and, to a lower extent, in cauline leaves, stems and roots.

It localises to the plastid. The protein resides in the chloroplast. The catalysed reaction is 2 superoxide + 2 H(+) = H2O2 + O2. Functionally, destroys radicals which are normally produced within the cells and which are toxic to biological systems. Mediates tolerance to stress, including photo-oxidative stress. The polypeptide is Superoxide dismutase [Cu-Zn] 2, chloroplastic (CSD2) (Arabidopsis thaliana (Mouse-ear cress)).